The sequence spans 392 residues: tRNA-specific 2-thiouridylase MnmA (392 aa).

ATP contacts are provided by residues A18–S25 and L44. C112 (nucleophile) is an active-site residue. A disulfide bridge connects residues C112 and C208. G136 contacts ATP. The segment at R158–Q160 is interaction with tRNA. The Cysteine persulfide intermediate role is filled by C208.

It belongs to the MnmA/TRMU family.

Its subcellular location is the cytoplasm. It carries out the reaction S-sulfanyl-L-cysteinyl-[protein] + uridine(34) in tRNA + AH2 + ATP = 2-thiouridine(34) in tRNA + L-cysteinyl-[protein] + A + AMP + diphosphate + H(+). Functionally, catalyzes the 2-thiolation of uridine at the wobble position (U34) of tRNA, leading to the formation of s(2)U34. The protein is tRNA-specific 2-thiouridylase MnmA of Rhodospirillum centenum (strain ATCC 51521 / SW).